The sequence spans 416 residues: Solute carrier family 35 member D3 (416 aa).

The next 10 helical transmembrane spans lie at Val-9–Leu-29, Phe-38–Leu-58, Leu-64–Leu-84, Met-103–Leu-123, Gly-131–Leu-151, Pro-155–Ile-175, Leu-187–Ala-207, Ala-224–Leu-244, Phe-257–Val-277, and Thr-280–Ala-300. The disordered stretch occupies residues Met-334 to Ser-384. A compositionally biased stretch (gly residues) spans Gly-339 to Ala-352.

The protein belongs to the TPT transporter family. SLC35D subfamily. Could interact with ATG14, BECN1 and PIK3C3 that form the PI3KC3-C1/AIC/autophagy initiation complex; enhancing the formation of the AIC and promoting autophagy.

The protein resides in the cytoplasmic vesicle. Its subcellular location is the secretory vesicle. It is found in the synaptic vesicle membrane. It localises to the early endosome membrane. The protein localises to the endoplasmic reticulum membrane. It catalyses the reaction UDP-alpha-D-glucose(in) = UDP-alpha-D-glucose(out). Its activity is regulated as follows. Inhibited by proton uncouplers that directly abolish the proton electrochemical gradient. In terms of biological role, probable UDP-glucose transmembrane transporter involved in UDP-glucose transport from the cytosol to the lumen of synaptic vesicles. It is involved in platelet dense granules maturation. Alternatively, could function as a molecular adapter enhancing the formation of the PI3KC3-C1/AIC/autophagy initiation complex to promote autophagy in dopaminergic neurons. Could also regulate the plasma membrane localization of the D(1A) dopamine receptor/DRD1 and dopamine signaling. The sequence is that of Solute carrier family 35 member D3 from Homo sapiens (Human).